A 601-amino-acid polypeptide reads, in one-letter code: Jacalin-related lectin 3 (601 aa).

3 consecutive Jacalin-type lectin domains span residues 13 to 155 (PASL…HTQP), 240 to 382 (AKTY…HVME), and 438 to 583 (PSGP…HMQH).

Belongs to the jacalin lectin family.

In Arabidopsis thaliana (Mouse-ear cress), this protein is Jacalin-related lectin 3 (JAL3).